A 573-amino-acid polypeptide reads, in one-letter code: Methionine--tRNA ligase (573 aa).

The 'HIGH' region motif lies at 10-20; the sequence is PYVNSVPHLGN. Zn(2+)-binding residues include cysteine 143, cysteine 146, cysteine 156, and cysteine 159. The 'KMSKS' region signature appears at 333 to 337; the sequence is KFSKS. Lysine 336 contacts ATP.

It belongs to the class-I aminoacyl-tRNA synthetase family. MetG type 1 subfamily. It depends on Zn(2+) as a cofactor.

Its subcellular location is the cytoplasm. The enzyme catalyses tRNA(Met) + L-methionine + ATP = L-methionyl-tRNA(Met) + AMP + diphosphate. Its function is as follows. Is required not only for elongation of protein synthesis but also for the initiation of all mRNA translation through initiator tRNA(fMet) aminoacylation. The sequence is that of Methionine--tRNA ligase from Saccharolobus islandicus (strain M.14.25 / Kamchatka #1) (Sulfolobus islandicus).